The sequence spans 63 residues: Beta-glucosidase A-3 (63 aa).

D12 is an active-site residue. N-linked (GlcNAc...) asparagine glycans are attached at residues N48 and N56.

Belongs to the glycosyl hydrolase 3 family.

It catalyses the reaction Hydrolysis of terminal, non-reducing beta-D-glucosyl residues with release of beta-D-glucose.. Its pathway is glycan metabolism; cellulose degradation. In Aspergillus wentii, this protein is Beta-glucosidase A-3.